Here is a 491-residue protein sequence, read N- to C-terminus: Acetyl-coenzyme A carboxylase carboxyl transferase subunit beta, chloroplastic (491 aa).

A disordered region spans residues 28-56 (LGPIENTSESEDPNRNDMKKNSHSWGSRD). Residues 223-491 (LWVQCENCYG…FPLNKNSIEH (269 aa)) form the CoA carboxyltransferase N-terminal domain. Residues Cys227, Cys230, Cys246, and Cys249 each coordinate Zn(2+). Residues 227–249 (CENCYGLNYKKILKSKMNLCEQC) form a C4-type zinc finger.

Belongs to the AccD/PCCB family. As to quaternary structure, acetyl-CoA carboxylase is a heterohexamer composed of biotin carboxyl carrier protein, biotin carboxylase and 2 subunits each of ACCase subunit alpha and ACCase plastid-coded subunit beta (accD). Requires Zn(2+) as cofactor.

The protein localises to the plastid. It localises to the chloroplast stroma. It carries out the reaction N(6)-carboxybiotinyl-L-lysyl-[protein] + acetyl-CoA = N(6)-biotinyl-L-lysyl-[protein] + malonyl-CoA. It participates in lipid metabolism; malonyl-CoA biosynthesis; malonyl-CoA from acetyl-CoA: step 1/1. Component of the acetyl coenzyme A carboxylase (ACC) complex. Biotin carboxylase (BC) catalyzes the carboxylation of biotin on its carrier protein (BCCP) and then the CO(2) group is transferred by the transcarboxylase to acetyl-CoA to form malonyl-CoA. This is Acetyl-coenzyme A carboxylase carboxyl transferase subunit beta, chloroplastic from Daucus carota (Wild carrot).